The primary structure comprises 210 residues: MPPYTIVYFPVRGRCEATRMLLADQGQSWKEEVVTIDVWLQGSLKSTCLYGQLPKFEDGDLTLYQSNAILRHLGRSLGLYGKDQKEAALVDMVNDGVEDLRCKYGTLIYTNYENGKDDYVKALPGHLKPFETLLSQNQGGKAFIVGNQISFADYNLLDLLLVHQVLAPGCLDNFPLLSAYVARLSARPKIKAFLSSPDHLNRPINGNGKQ.

A GST N-terminal domain is found at 2–81 (PPYTIVYFPV…HLGRSLGLYG (80 aa)). Tyrosine 4 is modified (phosphotyrosine; by EGFR). Glutathione contacts are provided by residues tyrosine 8, arginine 14, tryptophan 39, lysine 45, and 52–53 (QL). Threonine 62 is modified (phosphothreonine). Residue 65–66 (QS) participates in glutathione binding. The 122-residue stretch at 83 to 204 (DQKEAALVDM…SSPDHLNRPI (122 aa)) folds into the GST C-terminal domain. N6-succinyllysine occurs at positions 103 and 116. Lysine 128 bears the N6-acetyllysine mark.

It belongs to the GST superfamily. Pi family. In terms of assembly, homodimer. Interacts with CDK5. As to expression, present in kidney, lung, testis and placenta, very low levels in liver.

It is found in the cytoplasm. It localises to the mitochondrion. The protein localises to the nucleus. The enzyme catalyses RX + glutathione = an S-substituted glutathione + a halide anion + H(+). It carries out the reaction prostaglandin J2 + glutathione = prostaglandin J2-S-(R)-glutathione. It catalyses the reaction prostaglandin J2 + glutathione = prostaglandin J2-S-(S)-glutathione. The catalysed reaction is prostaglandin A2 + glutathione = prostaglandin A2-S-(S)-glutathione. The enzyme catalyses 11(S)-hydroxy-14(S),15(S)-epoxy-(5Z,8Z,12E)-eicosatrienoate + glutathione = (11S,15S)-dihydroxy-14(R)-S-glutathionyl-(5Z,8Z,12E)-eicosatrienoate. Conjugation of reduced glutathione to a wide number of exogenous and endogenous hydrophobic electrophiles. Involved in the formation of glutathione conjugates of both prostaglandin A2 (PGA2) and prostaglandin J2 (PGJ2). Participates in the formation of novel hepoxilin regioisomers. Negatively regulates CDK5 activity via p25/p35 translocation to prevent neurodegeneration. This Rattus norvegicus (Rat) protein is Glutathione S-transferase P.